Here is a 105-residue protein sequence, read N- to C-terminus: MILSTTPTLEGKTIREYRGIVVGEAILGANVFKDLFAGIRDIIGGRSGAYEKELARAREIAFDELKERAAALGANAVVGIDIDYEVVGQSGSMLMVSISGTAVLV.

The protein belongs to the UPF0145 family.

This is UPF0145 protein AHA_2580 from Aeromonas hydrophila subsp. hydrophila (strain ATCC 7966 / DSM 30187 / BCRC 13018 / CCUG 14551 / JCM 1027 / KCTC 2358 / NCIMB 9240 / NCTC 8049).